A 435-amino-acid chain; its full sequence is Methylenetetrahydrofolate--tRNA-(uracil-5-)-methyltransferase TrmFO (435 aa).

9–14 (GAGLAG) provides a ligand contact to FAD.

Belongs to the MnmG family. TrmFO subfamily. It depends on FAD as a cofactor.

The protein resides in the cytoplasm. It catalyses the reaction uridine(54) in tRNA + (6R)-5,10-methylene-5,6,7,8-tetrahydrofolate + NADH + H(+) = 5-methyluridine(54) in tRNA + (6S)-5,6,7,8-tetrahydrofolate + NAD(+). It carries out the reaction uridine(54) in tRNA + (6R)-5,10-methylene-5,6,7,8-tetrahydrofolate + NADPH + H(+) = 5-methyluridine(54) in tRNA + (6S)-5,6,7,8-tetrahydrofolate + NADP(+). Its function is as follows. Catalyzes the folate-dependent formation of 5-methyl-uridine at position 54 (M-5-U54) in all tRNAs. This chain is Methylenetetrahydrofolate--tRNA-(uracil-5-)-methyltransferase TrmFO, found in Staphylococcus epidermidis (strain ATCC 35984 / DSM 28319 / BCRC 17069 / CCUG 31568 / BM 3577 / RP62A).